Here is a 126-residue protein sequence, read N- to C-terminus: Follitropin subunit beta (126 aa).

Residues 1–19 (MKLIQLCILFWCWRAICCQ) form the signal peptide. Disulfide bonds link Cys21/Cys69, Cys35/Cys84, Cys38/Cys122, Cys46/Cys100, Cys50/Cys102, and Cys105/Cys112. Asn25 and Asn42 each carry an N-linked (GlcNAc...) asparagine glycan.

Belongs to the glycoprotein hormones subunit beta family. Heterodimer. The active follitropin is a heterodimer composed of an alpha chain/CGA shared with other hormones and a unique beta chain/FSHB shown here.

The protein resides in the secreted. In terms of biological role, together with the alpha chain CGA constitutes follitropin, the follicle-stimulating hormone, and provides its biological specificity to the hormone heterodimer. Binds FSHR, a G protein-coupled receptor, on target cells to activate downstream signaling pathways. Follitropin is involved in follicle development and spermatogenesis in reproductive organs. This Phodopus sungorus (Striped hairy-footed hamster) protein is Follitropin subunit beta (FSHB).